The sequence spans 340 residues: Ferrochelatase (340 aa).

Fe cation-binding residues include histidine 189 and glutamate 292.

This sequence belongs to the ferrochelatase family.

Its subcellular location is the cytoplasm. It catalyses the reaction heme b + 2 H(+) = protoporphyrin IX + Fe(2+). It participates in porphyrin-containing compound metabolism; protoheme biosynthesis; protoheme from protoporphyrin-IX: step 1/1. In terms of biological role, catalyzes the ferrous insertion into protoporphyrin IX. The protein is Ferrochelatase of Pseudomonas syringae pv. syringae (strain B728a).